We begin with the raw amino-acid sequence, 512 residues long: Transmembrane protein 102 (512 aa).

The Extracellular segment spans residues 1-267 (MASAVWGNAP…EAWPTLCPAQ (267 aa)). Residues 168-258 (PVPGGRDWIH…PGPQPSEARE (91 aa)) form a disordered region. 2 stretches are compositionally biased toward basic and acidic residues: residues 174–186 (DWIHPTDSREGPR) and 195–209 (PHSDIIEPEAHESLE). Over residues 210–226 (KSPSNVSVPESPQQNLT) the composition is skewed to polar residues. Residues 268-284 (VAAWFFASLAAVAESLF) form a helical membrane-spanning segment. Residues 285–512 (PVPGAPRLVH…GLAGVGAGSH (228 aa)) lie on the Cytoplasmic side of the membrane.

Interacts with CSF2RB; this interaction occurs preferentially in the absence of CSF2.

The protein localises to the cell membrane. Its function is as follows. Selectively involved in CSF2 deprivation-induced apoptosis via a mitochondria-dependent pathway. The polypeptide is Transmembrane protein 102 (TMEM102) (Bos taurus (Bovine)).